We begin with the raw amino-acid sequence, 101 residues long: Small ribosomal subunit protein uS14 (101 aa).

Belongs to the universal ribosomal protein uS14 family. Part of the 30S ribosomal subunit. Contacts proteins S3 and S10.

Binds 16S rRNA, required for the assembly of 30S particles and may also be responsible for determining the conformation of the 16S rRNA at the A site. The polypeptide is Small ribosomal subunit protein uS14 (Ruegeria sp. (strain TM1040) (Silicibacter sp.)).